The following is a 213-amino-acid chain: MKVLITGFDPFGGESINPALEAVKMIPENIEGAQVIKLEIPTVFRKSLEKIEEKIEEINPDVVISIGQAGGRFGVTPERVAINMDDARIEDNEGNQPIDISIYEDGESAYFSNLPIKAMVKEMVDNGIPASVSNTAGTFVCNHVMYGVLYLVNKKYKNIRAGFIHVPYIPAQVVNKPNTPSMAINDIAKGLELSIKAIVLNDNDIKTVGGAVC.

Active-site residues include Glu78, Cys141, and His165.

The protein belongs to the peptidase C15 family. As to quaternary structure, homotetramer.

It localises to the cytoplasm. The enzyme catalyses Release of an N-terminal pyroglutamyl group from a polypeptide, the second amino acid generally not being Pro.. Its function is as follows. Removes 5-oxoproline from various penultimate amino acid residues except L-proline. The protein is Pyrrolidone-carboxylate peptidase of Clostridium perfringens (strain 13 / Type A).